Reading from the N-terminus, the 294-residue chain is tRNA dimethylallyltransferase (294 aa).

Glycine 10–threonine 17 provides a ligand contact to ATP. Residue threonine 12 to threonine 17 coordinates substrate. Residues aspartate 35 to glutamine 38 are interaction with substrate tRNA.

Belongs to the IPP transferase family. As to quaternary structure, monomer. Mg(2+) serves as cofactor.

It carries out the reaction adenosine(37) in tRNA + dimethylallyl diphosphate = N(6)-dimethylallyladenosine(37) in tRNA + diphosphate. Catalyzes the transfer of a dimethylallyl group onto the adenine at position 37 in tRNAs that read codons beginning with uridine, leading to the formation of N6-(dimethylallyl)adenosine (i(6)A). The protein is tRNA dimethylallyltransferase of Streptococcus suis (strain 98HAH33).